The primary structure comprises 199 residues: Recombination protein RecR (199 aa).

The segment at 57-72 (CSSCRTFTEESLCPIC) adopts a C4-type zinc-finger fold. The Toprim domain occupies 81–176 (DLICVVETPA…NVSRIAHGVP (96 aa)).

It belongs to the RecR family.

Its function is as follows. May play a role in DNA repair. It seems to be involved in an RecBC-independent recombinational process of DNA repair. It may act with RecF and RecO. This Shewanella loihica (strain ATCC BAA-1088 / PV-4) protein is Recombination protein RecR.